The following is a 166-amino-acid chain: Large ribosomal subunit protein uL10 (166 aa).

This sequence belongs to the universal ribosomal protein uL10 family. As to quaternary structure, part of the ribosomal stalk of the 50S ribosomal subunit. The N-terminus interacts with L11 and the large rRNA to form the base of the stalk. The C-terminus forms an elongated spine to which L12 dimers bind in a sequential fashion forming a multimeric L10(L12)X complex.

Its function is as follows. Forms part of the ribosomal stalk, playing a central role in the interaction of the ribosome with GTP-bound translation factors. This chain is Large ribosomal subunit protein uL10, found in Aeromonas salmonicida (strain A449).